Here is a 382-residue protein sequence, read N- to C-terminus: Lipid-A-disaccharide synthase (382 aa).

The protein belongs to the LpxB family.

The catalysed reaction is 2-N,3-O-bis[(3R)-3-hydroxytetradecanoyl]-alpha-D-glucosaminyl 1-phosphate + UDP-2-N,3-O-bis[(3R)-3-hydroxytetradecanoyl]-alpha-D-glucosamine = lipid A disaccharide (E. coli) + UDP + H(+). It carries out the reaction a lipid X + a UDP-2-N,3-O-bis[(3R)-3-hydroxyacyl]-alpha-D-glucosamine = a lipid A disaccharide + UDP + H(+). The protein operates within glycolipid biosynthesis; lipid IV(A) biosynthesis; lipid IV(A) from (3R)-3-hydroxytetradecanoyl-[acyl-carrier-protein] and UDP-N-acetyl-alpha-D-glucosamine: step 5/6. In terms of biological role, condensation of UDP-2,3-diacylglucosamine and 2,3-diacylglucosamine-1-phosphate to form lipid A disaccharide, a precursor of lipid A, a phosphorylated glycolipid that anchors the lipopolysaccharide to the outer membrane of the cell. This chain is Lipid-A-disaccharide synthase, found in Escherichia coli (strain SMS-3-5 / SECEC).